Consider the following 68-residue polypeptide: Pleurocidin (68 aa).

A signal peptide spans 1 to 22; that stretch reads MKFTATFLMIAIFVLMVEPGEC. Residues 48-68 constitute a propeptide that is removed on maturation; the sequence is GDKQELNKRAVDEDPNVIVFE.

Belongs to the pleurocidin family. In terms of tissue distribution, goblet cells.

It localises to the secreted. Its function is as follows. Antimicrobial peptide with potent activity against Gram-positive and Gram-negative bacteria. Activity against E.coli and B.subtilis. Weaker activity against L.mucor, s.marcescens and P.aeruginosa. May play a role in innate host defense. This Pseudopleuronectes americanus (Winter flounder) protein is Pleurocidin (ple2).